A 132-amino-acid polypeptide reads, in one-letter code: Small ribosomal subunit protein uS11 (132 aa).

This sequence belongs to the universal ribosomal protein uS11 family. Part of the 30S ribosomal subunit.

In terms of biological role, located on the platform of the 30S subunit. This chain is Small ribosomal subunit protein uS11, found in Saccharolobus solfataricus (strain ATCC 35092 / DSM 1617 / JCM 11322 / P2) (Sulfolobus solfataricus).